Reading from the N-terminus, the 355-residue chain is Phosphoribosylformylglycinamidine cyclo-ligase (355 aa).

Belongs to the AIR synthase family.

The protein resides in the cytoplasm. It carries out the reaction 2-formamido-N(1)-(5-O-phospho-beta-D-ribosyl)acetamidine + ATP = 5-amino-1-(5-phospho-beta-D-ribosyl)imidazole + ADP + phosphate + H(+). It functions in the pathway purine metabolism; IMP biosynthesis via de novo pathway; 5-amino-1-(5-phospho-D-ribosyl)imidazole from N(2)-formyl-N(1)-(5-phospho-D-ribosyl)glycinamide: step 2/2. This Methylobacterium nodulans (strain LMG 21967 / CNCM I-2342 / ORS 2060) protein is Phosphoribosylformylglycinamidine cyclo-ligase.